The chain runs to 290 residues: 4-hydroxy-tetrahydrodipicolinate synthase (290 aa).

T44 serves as a coordination point for pyruvate. Residue Y132 is the Proton donor/acceptor of the active site. The Schiff-base intermediate with substrate role is filled by K160. I202 contributes to the pyruvate binding site.

It belongs to the DapA family. As to quaternary structure, homotetramer; dimer of dimers.

The protein localises to the cytoplasm. The enzyme catalyses L-aspartate 4-semialdehyde + pyruvate = (2S,4S)-4-hydroxy-2,3,4,5-tetrahydrodipicolinate + H2O + H(+). Its pathway is amino-acid biosynthesis; L-lysine biosynthesis via DAP pathway; (S)-tetrahydrodipicolinate from L-aspartate: step 3/4. In terms of biological role, catalyzes the condensation of (S)-aspartate-beta-semialdehyde [(S)-ASA] and pyruvate to 4-hydroxy-tetrahydrodipicolinate (HTPA). This Cereibacter sphaeroides (strain ATCC 17025 / ATH 2.4.3) (Rhodobacter sphaeroides) protein is 4-hydroxy-tetrahydrodipicolinate synthase.